We begin with the raw amino-acid sequence, 203 residues long: UPF0637 protein Sca_0732 (203 aa).

The protein belongs to the UPF0637 family.

This Staphylococcus carnosus (strain TM300) protein is UPF0637 protein Sca_0732.